The primary structure comprises 314 residues: Dihydroorotate dehydrogenase (fumarate) (314 aa).

Residues lysine 46, 70–74 (NSMGL), and asparagine 130 contribute to the substrate site. An FMN-binding site is contributed by 46-47 (KS). Asparagine 130 contacts FMN. Residues serine 132 and cysteine 133 each act as nucleophile in the active site. The FMN site is built by lysine 167 and isoleucine 195. 196–197 (NS) contributes to the substrate binding site. Residues glycine 224, 252 to 253 (GG), and 274 to 275 (GT) each bind FMN.

Belongs to the dihydroorotate dehydrogenase family. Type 1 subfamily. Homodimer. FMN serves as cofactor.

The protein resides in the cytoplasm. It carries out the reaction (S)-dihydroorotate + fumarate = orotate + succinate. It participates in pyrimidine metabolism; UMP biosynthesis via de novo pathway. Its function is as follows. Catalyzes the conversion of dihydroorotate to orotate with fumarate as the electron acceptor. The chain is Dihydroorotate dehydrogenase (fumarate) (URA1) from Saccharomyces mikatae (Yeast).